An 89-amino-acid polypeptide reads, in one-letter code: Cytochrome c6 (89 aa).

Cysteine 15, cysteine 18, histidine 19, and methionine 61 together coordinate heme c.

It belongs to the cytochrome c family. PetJ subfamily. As to quaternary structure, monomer. Binds 1 heme c group covalently per subunit.

It is found in the plastid. The protein resides in the chloroplast thylakoid lumen. In terms of biological role, functions as an electron carrier between membrane-bound cytochrome b6-f and photosystem I in oxygenic photosynthesis. The protein is Cytochrome c6 (petJ) of Tetradesmus obliquus (Green alga).